The following is a 382-amino-acid chain: Guanine nucleotide exchange factor for Rab-3A (382 aa).

A compositionally biased stretch (pro residues) spans 1–17; sequence MWSGPPQPDQGLPPPLA. A disordered region spans residues 1-60; sequence MWSGPPQPDQGLPPPLAAVPVPWKSTDPCQGHRESPGALVETSAGEEAQGQEGPAAAQLD. Low complexity predominate over residues 45–58; sequence GEEAQGQEGPAAAQ. Residues 73–161 are a coiled coil; sequence EKGSEFLKEE…AEVTALKTLV (89 aa). The segment at 166–198 is disordered; sequence PASPNRELHPQLLSPTKAGPRKGHSRHKSTSST. A phosphoserine mark is found at S168 and S179. A compositionally biased stretch (basic residues) spans 184-194; sequence GPRKGHSRHKS.

It belongs to the SEC2 family. Interacts with RAB3A and IHPK1 through the coiled-coil domain. This interaction is competitive. IHPK1 kinase activity is not required for this interaction.

In terms of biological role, guanine nucleotide exchange factor (GEF) which may activate RAB3A, a GTPase that regulates synaptic vesicle exocytosis. Promotes the exchange of GDP to GTP, converting inactive GDP-bound Rab proteins into their active GTP-bound form. May also activate RAB8A and RAB8B. In Homo sapiens (Human), this protein is Guanine nucleotide exchange factor for Rab-3A (RAB3IL1).